The chain runs to 79 residues: UPF0154 protein SUB0399 (79 aa).

Residues 4-24 (AIWILLIVLALIGGLFGGVFI) traverse the membrane as a helical segment.

Belongs to the UPF0154 family.

It is found in the cell membrane. The sequence is that of UPF0154 protein SUB0399 from Streptococcus uberis (strain ATCC BAA-854 / 0140J).